A 336-amino-acid chain; its full sequence is Phenylalanine--tRNA ligase alpha subunit (336 aa).

Residue E255 coordinates Mg(2+).

Belongs to the class-II aminoacyl-tRNA synthetase family. Phe-tRNA synthetase alpha subunit type 1 subfamily. As to quaternary structure, tetramer of two alpha and two beta subunits. It depends on Mg(2+) as a cofactor.

The protein localises to the cytoplasm. The enzyme catalyses tRNA(Phe) + L-phenylalanine + ATP = L-phenylalanyl-tRNA(Phe) + AMP + diphosphate + H(+). The protein is Phenylalanine--tRNA ligase alpha subunit of Gemmatimonas aurantiaca (strain DSM 14586 / JCM 11422 / NBRC 100505 / T-27).